The sequence spans 78 residues: UPF0349 protein YuzB (78 aa).

The protein belongs to the UPF0349 family.

The sequence is that of UPF0349 protein YuzB (yuzB) from Bacillus subtilis (strain 168).